The following is a 162-amino-acid chain: RNA pyrophosphohydrolase (162 aa).

Residues 7–149 (KYRPCVGIML…KKEVYKTVIE (143 aa)) form the Nudix hydrolase domain. Positions 40–61 (GGVDDGEELEQAALRELLEEVG) match the Nudix box motif.

The protein belongs to the Nudix hydrolase family. RppH subfamily. It depends on a divalent metal cation as a cofactor.

Accelerates the degradation of transcripts by removing pyrophosphate from the 5'-end of triphosphorylated RNA, leading to a more labile monophosphorylated state that can stimulate subsequent ribonuclease cleavage. This chain is RNA pyrophosphohydrolase, found in Wolbachia sp. subsp. Drosophila simulans (strain wRi).